A 426-amino-acid polypeptide reads, in one-letter code: 3',5'-cyclic-nucleotide phosphodiesterase (426 aa).

The segment at 210 to 229 is disordered; the sequence is DKEDAQHHSNSNSNSNNIWG.

The protein belongs to the cyclic nucleotide phosphodiesterase class-II family.

The catalysed reaction is a nucleoside 3',5'-cyclic phosphate + H2O = a nucleoside 5'-phosphate + H(+). The polypeptide is 3',5'-cyclic-nucleotide phosphodiesterase (PDE1) (Candida albicans (Yeast)).